The chain runs to 400 residues: Elongation factor Tu 2 (400 aa).

A tr-type G domain is found at 10–209; sequence KPHLNIGTIG…AVDSYIPLPQ (200 aa). The G1 stretch occupies residues 19-26; that stretch reads GHIDHGKT. Position 19 to 26 (19 to 26) interacts with GTP; it reads GHIDHGKT. Thr-26 lines the Mg(2+) pocket. The segment at 60 to 64 is G2; it reads GITIN. The tract at residues 81 to 84 is G3; that stretch reads DCPG. Residues 81–85 and 136–139 each bind GTP; these read DCPGH and NKID. A G4 region spans residues 136–139; sequence NKID. The interval 174 to 176 is G5; that stretch reads SAL.

The protein belongs to the TRAFAC class translation factor GTPase superfamily. Classic translation factor GTPase family. EF-Tu/EF-1A subfamily. Monomer.

Its subcellular location is the cytoplasm. It catalyses the reaction GTP + H2O = GDP + phosphate + H(+). Functionally, GTP hydrolase that promotes the GTP-dependent binding of aminoacyl-tRNA to the A-site of ribosomes during protein biosynthesis. This chain is Elongation factor Tu 2, found in Syntrophomonas wolfei subsp. wolfei (strain DSM 2245B / Goettingen).